Consider the following 889-residue polypeptide: Protein argonaute 15 (889 aa).

Disordered regions lie at residues 1–26 (MESH…SRKG) and 119–150 (EDAS…RMKR). Positions 122–132 (SSSGRTTTRRS) are enriched in low complexity. In terms of domain architecture, PAZ spans 264-379 (PVIEFLLFNQ…IPLELCHLVP (116 aa)). The Piwi domain occupies 546 to 853 (FVLCVLPERK…AAAQVSQFVR (308 aa)). The tract at residues 857-878 (AASEGSGDGGAPPRPVPELPRL) is disordered.

Belongs to the argonaute family. Ago subfamily.

Probably involved in the RNA silencing pathway. May bind to short RNAs such as microRNAs (miRNAs) or short interfering RNAs (siRNAs), and represses the translation of mRNAs which are complementary to them. The polypeptide is Protein argonaute 15 (AGO15) (Oryza sativa subsp. japonica (Rice)).